Reading from the N-terminus, the 306-residue chain is Dermonecrotic toxin LiSicTox-alphaIA2bi (306 aa).

A signal peptide spans 1 to 18; it reads MLPYIALILVCWSVLSQA. Residues 19–26 constitute a propeptide that is removed on maturation; it reads AQTDVEGR. Histidine 38 is a catalytic residue. Glutamate 58 and aspartate 60 together coordinate Mg(2+). The active-site Nucleophile is histidine 74. 2 disulfide bridges follow: cysteine 78-cysteine 84 and cysteine 80-cysteine 223. Aspartate 118 is a Mg(2+) binding site. Asparagine 283 is a glycosylation site (N-linked (GlcNAc...) asparagine).

Belongs to the arthropod phospholipase D family. Class II subfamily. Mg(2+) serves as cofactor. In terms of tissue distribution, expressed by the venom gland.

Its subcellular location is the secreted. The enzyme catalyses an N-(acyl)-sphingosylphosphocholine = an N-(acyl)-sphingosyl-1,3-cyclic phosphate + choline. It catalyses the reaction an N-(acyl)-sphingosylphosphoethanolamine = an N-(acyl)-sphingosyl-1,3-cyclic phosphate + ethanolamine. It carries out the reaction a 1-acyl-sn-glycero-3-phosphocholine = a 1-acyl-sn-glycero-2,3-cyclic phosphate + choline. The catalysed reaction is a 1-acyl-sn-glycero-3-phosphoethanolamine = a 1-acyl-sn-glycero-2,3-cyclic phosphate + ethanolamine. Dermonecrotic toxins cleave the phosphodiester linkage between the phosphate and headgroup of certain phospholipids (sphingolipid and lysolipid substrates), forming an alcohol (often choline) and a cyclic phosphate. This toxin acts on sphingomyelin (SM). It may also act on ceramide phosphoethanolamine (CPE), lysophosphatidylcholine (LPC) and lysophosphatidylethanolamine (LPE), but not on lysophosphatidylserine (LPS), and lysophosphatidylglycerol (LPG). It acts by transphosphatidylation, releasing exclusively cyclic phosphate products as second products. Induces dermonecrosis, hemolysis, increased vascular permeability, edema, inflammatory response, and platelet aggregation. The protein is Dermonecrotic toxin LiSicTox-alphaIA2bi of Loxosceles intermedia (Brown spider).